Here is a 72-residue protein sequence, read N- to C-terminus: MAKEEAIEIEGVILEALPNAQFKVKLENSLEVLAHVSGKIRMHYIRILPGDKVKVQISPYDISKGRITYRYK.

Positions 1–72 (MAKEEAIEIE…SKGRITYRYK (72 aa)) constitute an S1-like domain.

The protein belongs to the IF-1 family. Component of the 30S ribosomal translation pre-initiation complex which assembles on the 30S ribosome in the order IF-2 and IF-3, IF-1 and N-formylmethionyl-tRNA(fMet); mRNA recruitment can occur at any time during PIC assembly.

It localises to the cytoplasm. One of the essential components for the initiation of protein synthesis. Stabilizes the binding of IF-2 and IF-3 on the 30S subunit to which N-formylmethionyl-tRNA(fMet) subsequently binds. Helps modulate mRNA selection, yielding the 30S pre-initiation complex (PIC). Upon addition of the 50S ribosomal subunit IF-1, IF-2 and IF-3 are released leaving the mature 70S translation initiation complex. The sequence is that of Translation initiation factor IF-1 from Chlorobium luteolum (strain DSM 273 / BCRC 81028 / 2530) (Pelodictyon luteolum).